Here is an 82-residue protein sequence, read N- to C-terminus: Exodeoxyribonuclease 7 small subunit (82 aa).

This sequence belongs to the XseB family. Heterooligomer composed of large and small subunits.

The protein resides in the cytoplasm. It carries out the reaction Exonucleolytic cleavage in either 5'- to 3'- or 3'- to 5'-direction to yield nucleoside 5'-phosphates.. Bidirectionally degrades single-stranded DNA into large acid-insoluble oligonucleotides, which are then degraded further into small acid-soluble oligonucleotides. This is Exodeoxyribonuclease 7 small subunit from Sodalis glossinidius (strain morsitans).